An 806-amino-acid polypeptide reads, in one-letter code: Glycerol-3-phosphate acyltransferase (806 aa).

Positions 305–310 match the HXXXXD motif motif; it reads CHRSHM.

The protein belongs to the GPAT/DAPAT family.

It is found in the cell inner membrane. The enzyme catalyses sn-glycerol 3-phosphate + an acyl-CoA = a 1-acyl-sn-glycero-3-phosphate + CoA. It participates in phospholipid metabolism; CDP-diacylglycerol biosynthesis; CDP-diacylglycerol from sn-glycerol 3-phosphate: step 1/3. The chain is Glycerol-3-phosphate acyltransferase from Salmonella arizonae (strain ATCC BAA-731 / CDC346-86 / RSK2980).